The sequence spans 328 residues: Gonadotropin-releasing hormone receptor (328 aa).

Topologically, residues 1-38 are extracellular; that stretch reads MANSASPEQNQNHCSASNSSIPLTQANLPTLTLSGKIR. A glycan (N-linked (GlcNAc...) asparagine) is linked at Asn18. A helical membrane pass occupies residues 39–59; the sequence is VTVTFFLFLLSTTFNASFLLK. The Cytoplasmic portion of the chain corresponds to 60–84; the sequence is LHKWTQKKENGKKLSKMKVLLKHLT. The helical transmembrane segment at 85-105 threads the bilayer; sequence LANLLETLIVMPLDGMWNITV. The Extracellular segment spans residues 106–115; it reads QWYAGELLCK. A disulfide bridge links Cys114 with Cys196. Residues 116–136 form a helical membrane-spanning segment; it reads VLSYLKLFSMYAPAFMMVVIS. Residues 137-157 are Cytoplasmic-facing; the sequence is LDRSLAITRPLAVKSNSKLGR. Residues 158-178 traverse the membrane as a helical segment; that stretch reads SMIGLAWLLSSIFAGPQLYIF. Over 179-208 the chain is Extracellular; the sequence is RMIHLADSSGQTEGFSQCVTHCSFPQWWHQ. A helical membrane pass occupies residues 209–229; that stretch reads AFYNFFTFSCLFIIPLLFMLI. Over 230-271 the chain is Cytoplasmic; that stretch reads CNAKIIFTLTRVLHQDPHKLQLNQSKNNIPRARLRTLKMTVA. The chain crosses the membrane as a helical span at residues 272–292; sequence FATSFTVCWTPYYVLGIWYWF. At 293–306 the chain is on the extracellular side; it reads DPEMLNRVSDPVNH. A helical membrane pass occupies residues 307 to 327; it reads FFFLFALLNPCFDPLIYGYFS. A topological domain (cytoplasmic) is located at residue Leu328.

Belongs to the G-protein coupled receptor 1 family.

It is found in the cell membrane. Functionally, receptor for gonadotropin releasing hormone (GnRH) that mediates the action of GnRH to stimulate the secretion of the gonadotropic hormones luteinizing hormone (LH) and follicle-stimulating hormone (FSH). This receptor mediates its action by association with G-proteins that activate a phosphatidylinositol-calcium second messenger system. The protein is Gonadotropin-releasing hormone receptor (GNRHR) of Equus caballus (Horse).